Here is a 271-residue protein sequence, read N- to C-terminus: 3-methyl-2-oxobutanoate hydroxymethyltransferase (271 aa).

D49 and D88 together coordinate Mg(2+). Residues 49–50 (DS), D88, and K118 contribute to the 3-methyl-2-oxobutanoate site. E120 lines the Mg(2+) pocket. E187 serves as the catalytic Proton acceptor.

It belongs to the PanB family. In terms of assembly, homodecamer; pentamer of dimers. Requires Mg(2+) as cofactor.

It localises to the cytoplasm. The catalysed reaction is 3-methyl-2-oxobutanoate + (6R)-5,10-methylene-5,6,7,8-tetrahydrofolate + H2O = 2-dehydropantoate + (6S)-5,6,7,8-tetrahydrofolate. The protein operates within cofactor biosynthesis; (R)-pantothenate biosynthesis; (R)-pantoate from 3-methyl-2-oxobutanoate: step 1/2. Functionally, catalyzes the reversible reaction in which hydroxymethyl group from 5,10-methylenetetrahydrofolate is transferred onto alpha-ketoisovalerate to form ketopantoate. The protein is 3-methyl-2-oxobutanoate hydroxymethyltransferase of Bartonella tribocorum (strain CIP 105476 / IBS 506).